Reading from the N-terminus, the 713-residue chain is Low-density lipoprotein receptor-related protein 10 (713 aa).

The N-terminal stretch at 1 to 16 (MLLATLLLLLLGGALA) is a signal peptide. The Extracellular portion of the chain corresponds to 17 to 440 (HPDRIIFPNH…WDCSYVLPRK (424 aa)). Disulfide bonds link cysteine 28/cysteine 57 and cysteine 80/cysteine 98. The CUB 1 domain occupies 28 to 136 (CEDPPAVLLE…QGFLLSYSQD (109 aa)). N-linked (GlcNAc...) asparagine glycosylation occurs at asparagine 56. Asparagine 111 carries an N-linked (GlcNAc...) asparagine glycan. The LDL-receptor class A 1 domain occupies 139 to 175 (MCLQEEFQCLNHRCVSAVQRCDGVDACGDGSDEAGCS). 4 disulfides stabilise this stretch: cysteine 140-cysteine 152, cysteine 147-cysteine 165, cysteine 159-cysteine 174, and cysteine 192-cysteine 220. The CUB 2 domain occupies 192 to 305 (CNVTLEDFYG…RGFNATYHVR (114 aa)). N-linked (GlcNAc...) asparagine glycosylation is found at asparagine 193 and asparagine 299. 3 consecutive LDL-receptor class A domains span residues 307–354 (YCLP…EDCP), 355–397 (GCPP…RRCR), and 398–434 (HCQPGNFRCRDEKCVYETWVCDGQPDCADGSDEWDCS). 9 disulfide bridges follow: cysteine 308–cysteine 331, cysteine 315–cysteine 344, cysteine 338–cysteine 353, cysteine 356–cysteine 374, cysteine 363–cysteine 387, cysteine 381–cysteine 396, cysteine 399–cysteine 411, cysteine 406–cysteine 424, and cysteine 418–cysteine 433. Residues 441 to 461 (VITAAVIGSLVCGLLLVIALG) traverse the membrane as a helical segment. The Cytoplasmic segment spans residues 462–713 (CTCKLYAIRT…AEAEDEPLLT (252 aa)). Residues 564 to 637 (GLLPRTNTPA…SPAPTTVPEA (74 aa)) form a disordered region. Positions 569–584 (TNTPARASEARSQVTP) are enriched in polar residues. Threonine 596 is modified (phosphothreonine). Over residues 621 to 636 (PLPSASTSPAPTTVPE) the composition is skewed to low complexity.

Belongs to the LDLR family. Expressed in blood leukocyte, lung, placenta, small intestine, liver, kidney, spleen, thymus, colon, skeletal muscle and heart.

It localises to the membrane. It is found in the coated pit. Probable receptor, which is involved in the internalization of lipophilic molecules and/or signal transduction. May be involved in the uptake of lipoprotein APOE in liver. This is Low-density lipoprotein receptor-related protein 10 (LRP10) from Homo sapiens (Human).